Consider the following 672-residue polypeptide: tRNA 5-methylaminomethyl-2-thiouridine biosynthesis bifunctional protein MnmC (672 aa).

The interval 1 to 241 (MHKVQFADVH…KRECLQGVKA (241 aa)) is tRNA (mnm(5)s(2)U34)-methyltransferase. The interval 269 to 672 (IGGGIASVFS…LLKGSQVKQG (404 aa)) is FAD-dependent cmnm(5)s(2)U34 oxidoreductase.

This sequence in the N-terminal section; belongs to the methyltransferase superfamily. tRNA (mnm(5)s(2)U34)-methyltransferase family. It in the C-terminal section; belongs to the DAO family. Requires FAD as cofactor.

It localises to the cytoplasm. It catalyses the reaction 5-aminomethyl-2-thiouridine(34) in tRNA + S-adenosyl-L-methionine = 5-methylaminomethyl-2-thiouridine(34) in tRNA + S-adenosyl-L-homocysteine + H(+). In terms of biological role, catalyzes the last two steps in the biosynthesis of 5-methylaminomethyl-2-thiouridine (mnm(5)s(2)U) at the wobble position (U34) in tRNA. Catalyzes the FAD-dependent demodification of cmnm(5)s(2)U34 to nm(5)s(2)U34, followed by the transfer of a methyl group from S-adenosyl-L-methionine to nm(5)s(2)U34, to form mnm(5)s(2)U34. The polypeptide is tRNA 5-methylaminomethyl-2-thiouridine biosynthesis bifunctional protein MnmC (Pasteurella multocida (strain Pm70)).